A 427-amino-acid polypeptide reads, in one-letter code: Isoprenylcysteine alpha-carbonyl methylesterase ICME (427 aa).

The interval 26–59 (EVLPDEDSDRTTLLNGEPLRRRVSGKSPVDEGPR) is disordered. A run of 2 helical transmembrane segments spans residues 102-122 (LLALTCYAMLLMPGFLQVAYS) and 157-177 (VVVFVTGGAWIIGYKAWGSLL). Substrate-binding positions include 163 to 165 (GGA) and 234 to 236 (QSA). Active-site residues include S235, D336, and H368.

The protein belongs to the AB hydrolase superfamily. Isoprenylcysteine methylesterase family. As to expression, expressed in roots, rosette and cauline leaves, stems, flowers and siliques.

The protein localises to the endoplasmic reticulum membrane. It localises to the golgi apparatus membrane. It catalyses the reaction [protein]-C-terminal S-[(2E,6E)-farnesyl]-L-cysteine methyl ester + H2O = [protein]-C-terminal S-[(2E,6E)-farnesyl]-L-cysteine + methanol + H(+). In terms of biological role, catalyzes the demethylation of isoprenylcysteine methylesters. In vitro, is specific for N-acetyl-S-farnesyl-L-cysteine methyl ester (AFCme) and has low activity toward N-acetyl-S-geranyl-L-cysteine methyl ester (AGCme). Acts as a positive regulator of ABA signaling. May be involved in the demethylation and inactivation of isoprenylated negative regulators of abscisic acid (ABA) signaling. Carboxyl methylation is a reversible and potentially regulated step in the post-translational modification of prenylated proteins. The protein is Isoprenylcysteine alpha-carbonyl methylesterase ICME of Arabidopsis thaliana (Mouse-ear cress).